Reading from the N-terminus, the 338-residue chain is RNA 3'-terminal phosphate cyclase (338 aa).

ATP-binding positions include Gln103 and 283 to 287; that span reads YLADQ. His308 (tele-AMP-histidine intermediate) is an active-site residue.

The protein belongs to the RNA 3'-terminal cyclase family. Type 1 subfamily.

It is found in the cytoplasm. The catalysed reaction is a 3'-end 3'-phospho-ribonucleotide-RNA + ATP = a 3'-end 2',3'-cyclophospho-ribonucleotide-RNA + AMP + diphosphate. Functionally, catalyzes the conversion of 3'-phosphate to a 2',3'-cyclic phosphodiester at the end of RNA. The mechanism of action of the enzyme occurs in 3 steps: (A) adenylation of the enzyme by ATP; (B) transfer of adenylate to an RNA-N3'P to produce RNA-N3'PP5'A; (C) and attack of the adjacent 2'-hydroxyl on the 3'-phosphorus in the diester linkage to produce the cyclic end product. The biological role of this enzyme is unknown but it is likely to function in some aspects of cellular RNA processing. The protein is RNA 3'-terminal phosphate cyclase of Escherichia coli O81 (strain ED1a).